Reading from the N-terminus, the 694-residue chain is Transcription activator of gluconeogenesis PTRG_06536 (694 aa).

The tract at residues 1 to 57 (MTTPDAEDASPSPEYRSDQDDDMAAEQTTDRQSGDASPTQKPANGKPNAKDPLRPRR) is disordered. Residues 64 to 92 (CFACQRAHLTCGDERPCGRCIKRGLQDHC) constitute a DNA-binding region (zn(2)-C6 fungal-type). Disordered stretches follow at residues 175–216 (FSNQ…FGPL), 289–369 (AMAF…GDNP), 384–420 (AQRS…RDTK), and 539–569 (VNLG…SEGA). The span at 193-204 (SVQNAGAPSTMS) shows a compositional bias: polar residues. Over residues 205-214 (QGQQGMQQFG) the composition is skewed to low complexity. Residues 302-324 (WQETQSRQGSMHVHTPNNTSGSG) are compositionally biased toward polar residues. Low complexity predominate over residues 349–363 (ATHSTASPASTDAST). The span at 392 to 408 (RPQQENRPPTTALQSIH) shows a compositional bias: polar residues. The region spanning 485–559 (LQRHLMTLQE…SDTSTQNTTP (75 aa)) is the PAS domain.

The protein belongs to the ERT1/acuK family.

Its subcellular location is the nucleus. Functionally, transcription factor which regulates nonfermentable carbon utilization. Activator of gluconeogenetic genes. This is Transcription activator of gluconeogenesis PTRG_06536 from Pyrenophora tritici-repentis (strain Pt-1C-BFP) (Wheat tan spot fungus).